Here is a 547-residue protein sequence, read N- to C-terminus: Cytochrome P450 monooxygenase 81 (547 aa).

Helical transmembrane passes span 6-23 (IPTQ…LFLL) and 106-124 (AFFA…ATAG). Cysteine 483 is a heme binding site. 2 N-linked (GlcNAc...) asparagine glycosylation sites follow: asparagine 503 and asparagine 516.

Belongs to the cytochrome P450 family. Heme is required as a cofactor.

The protein resides in the membrane. Its pathway is secondary metabolite biosynthesis. Its function is as follows. Cytochrome P450 monooxygenase that is able to use dehydroabietic acid as a substrate for oxidation. In Postia placenta (strain ATCC 44394 / Madison 698-R) (Brown rot fungus), this protein is Cytochrome P450 monooxygenase 81.